Consider the following 275-residue polypeptide: Undecaprenyl-diphosphatase (275 aa).

Helical transmembrane passes span 1-21, 41-61, 95-115, 118-138, 192-212, 223-243, and 255-275; these read MTTF…FLPV, ILFL…FVYA, LLII…KDLF, FYNS…LLWT, ATKF…VFEV, FTLT…VFAI, and LYYF…FSLL.

It belongs to the UppP family.

Its subcellular location is the cell membrane. It catalyses the reaction di-trans,octa-cis-undecaprenyl diphosphate + H2O = di-trans,octa-cis-undecaprenyl phosphate + phosphate + H(+). Its function is as follows. Catalyzes the dephosphorylation of undecaprenyl diphosphate (UPP). Confers resistance to bacitracin. This chain is Undecaprenyl-diphosphatase, found in Alkaliphilus metalliredigens (strain QYMF).